We begin with the raw amino-acid sequence, 275 residues long: Translation initiation factor 2 subunit alpha (275 aa).

One can recognise an S1 motif domain in the interval 12 to 83; the sequence is GEFVVATVKR…RKGHIDLSLR (72 aa).

This sequence belongs to the eIF-2-alpha family. As to quaternary structure, heterotrimer composed of an alpha, a beta and a gamma chain.

In terms of biological role, eIF-2 functions in the early steps of protein synthesis by forming a ternary complex with GTP and initiator tRNA. This is Translation initiation factor 2 subunit alpha (eif2a) from Pyrococcus abyssi (strain GE5 / Orsay).